Reading from the N-terminus, the 152-residue chain is Regulatory protein RecX (152 aa).

This sequence belongs to the RecX family.

The protein localises to the cytoplasm. Its function is as follows. Modulates RecA activity. This is Regulatory protein RecX from Haemophilus influenzae (strain PittGG).